The following is a 414-amino-acid chain: Glutamyl-tRNA reductase (414 aa).

Residues 49 to 52 (TCNR), serine 108, 113 to 115 (EPQ), and glutamine 119 contribute to the substrate site. Cysteine 50 acts as the Nucleophile in catalysis. NADP(+) is bound at residue 188-193 (GAGQTG).

The protein belongs to the glutamyl-tRNA reductase family. As to quaternary structure, homodimer.

The catalysed reaction is (S)-4-amino-5-oxopentanoate + tRNA(Glu) + NADP(+) = L-glutamyl-tRNA(Glu) + NADPH + H(+). The protein operates within porphyrin-containing compound metabolism; protoporphyrin-IX biosynthesis; 5-aminolevulinate from L-glutamyl-tRNA(Glu): step 1/2. In terms of biological role, catalyzes the NADPH-dependent reduction of glutamyl-tRNA(Glu) to glutamate 1-semialdehyde (GSA). The sequence is that of Glutamyl-tRNA reductase from Francisella tularensis subsp. holarctica (strain LVS).